Here is a 1010-residue protein sequence, read N- to C-terminus: PHD finger protein 20 (1010 aa).

Tudor domains follow at residues 4-69 (HPPN…RPLE) and 83-147 (GSSE…GNAR). Disordered stretches follow at residues 142 to 373 (IVGN…EGQL) and 483 to 609 (EKSP…GKLK). Residues 147–246 (RPKETDHKSL…VEKKPEKDLV (100 aa)) are compositionally biased toward basic and acidic residues. A Phosphoserine modification is found at serine 159. Positions 257 to 269 (KRKRGRPPSITPT) form a DNA-binding region, a.T hook. The segment covering 267–280 (TPTAVDSNSQTLQP) has biased composition (polar residues). Basic and acidic residues-rich tracts occupy residues 292 to 325 (KRSD…DLSR), 483 to 493 (EKSPEPEEGPG), and 525 to 541 (AKEK…ELVR). The C2H2-type zinc-finger motif lies at 455–485 (FRCKVLDCLKFFRKAKLLHYHMKYFHGMEKS). Over residues 542–554 (VKPKKKKKKKKKT) the composition is skewed to basic residues. The PHD-type zinc-finger motif lies at 657 to 703 (RCICEVQEENDFMIQCEECQCWQHGVCMGLLEENVPEKYTCYVCQDP). A disordered region spans residues 804–827 (RSEESPSYRTLNGAVEKPSPLPRS). The residue at position 841 (lysine 841) is an N6-acetyllysine. A phosphoserine mark is found at serine 876 and serine 878. The tract at residues 877-902 (LSPRLGWPIDQDRSRGDIDPKPSSPK) is disordered. Basic and acidic residues predominate over residues 886–902 (DQDRSRGDIDPKPSSPK).

As to quaternary structure, homodimer; disulfide-linked. Component of some MLL1/MLL complex, at least composed of the core components KMT2A/MLL1, ASH2L, HCFC1, WDR5 and RBBP5, as well as the facultative components BACC1, CHD8, E2F6, HSP70, INO80C, KANSL1, LAS1L, MAX, MCRS1, MGA, MYST1/MOF, PELP1, PHF20, PRP31, RING2, RUVB1/TIP49A, RUVB2/TIP49B, SENP3, TAF1, TAF4, TAF6, TAF7, TAF9 and TEX10. Component of the NSL complex at least composed of MOF/KAT8, KANSL1, KANSL2, KANSL3, MCRS1, PHF20, OGT1/OGT, WDR5 and HCFC1. In terms of processing, ubiquitinated by TRIM26; leading to proteasomal degradation.

The protein resides in the nucleus. Its function is as follows. Contributes to methyllysine-dependent p53/TP53 stabilization and up-regulation after DNA damage. Methyllysine-binding protein, component of the MOF histone acetyltransferase protein complex. Not required for maintaining the global histone H4 'Lys-16' acetylation (H4K16ac) levels or locus specific histone acetylation, but instead works downstream in transcriptional regulation of MOF target genes. As part of the NSL complex it may be involved in acetylation of nucleosomal histone H4 on several lysine residues. The sequence is that of PHD finger protein 20 (Phf20) from Mus musculus (Mouse).